The chain runs to 372 residues: Glutamate 5-kinase (372 aa).

Lysine 14 contacts ATP. The substrate site is built by serine 54, aspartate 141, and asparagine 153. Residue 173–174 participates in ATP binding; sequence TD. A PUA domain is found at 280–358; that stretch reads RGHVVIDAGA…GEIEAVLGYM (79 aa).

This sequence belongs to the glutamate 5-kinase family.

The protein resides in the cytoplasm. The catalysed reaction is L-glutamate + ATP = L-glutamyl 5-phosphate + ADP. The protein operates within amino-acid biosynthesis; L-proline biosynthesis; L-glutamate 5-semialdehyde from L-glutamate: step 1/2. Functionally, catalyzes the transfer of a phosphate group to glutamate to form L-glutamate 5-phosphate. This is Glutamate 5-kinase from Burkholderia thailandensis (strain ATCC 700388 / DSM 13276 / CCUG 48851 / CIP 106301 / E264).